The following is a 240-amino-acid chain: Cell division protein FtsQ (240 aa).

The Cytoplasmic segment spans residues 1–7 (MTGPGLR). Residues 8–28 (LLAGMGLAGALVLGLSLWLHF) traverse the membrane as a helical segment. Over 29-240 (DPDQHLPIGS…EADNDGGNAR (212 aa)) the chain is Periplasmic. In terms of domain architecture, POTRA spans 34 to 102 (LPIGSIQITG…DTLEVHVTEP (69 aa)).

It belongs to the FtsQ/DivIB family. FtsQ subfamily. As to quaternary structure, part of a complex composed of FtsB, FtsL and FtsQ.

It localises to the cell inner membrane. Its function is as follows. Essential cell division protein. May link together the upstream cell division proteins, which are predominantly cytoplasmic, with the downstream cell division proteins, which are predominantly periplasmic. May control correct divisome assembly. In Thioalkalivibrio sp. (strain K90mix), this protein is Cell division protein FtsQ.